Reading from the N-terminus, the 204-residue chain is Nucleoside triphosphate pyrophosphatase (204 aa).

The Proton acceptor role is filled by Asp-78.

It belongs to the Maf family. Requires a divalent metal cation as cofactor.

The protein localises to the cytoplasm. It catalyses the reaction a ribonucleoside 5'-triphosphate + H2O = a ribonucleoside 5'-phosphate + diphosphate + H(+). It carries out the reaction a 2'-deoxyribonucleoside 5'-triphosphate + H2O = a 2'-deoxyribonucleoside 5'-phosphate + diphosphate + H(+). In terms of biological role, nucleoside triphosphate pyrophosphatase. May have a dual role in cell division arrest and in preventing the incorporation of modified nucleotides into cellular nucleic acids. The sequence is that of Nucleoside triphosphate pyrophosphatase from Prochlorococcus marinus (strain MIT 9215).